The primary structure comprises 279 residues: MASDSPLRAHLRLKFAESSGITRMVERDHHGPLLVQKPLYPEGYEVCQAVVIHPPGGVVAGDELGIRVHVGPSAHAQITSPGATKWYKSKGRTARQHVYLHAEAGGVLEWMPQETIFFNNARVMLHHEVELEKDSVYMSCEILCFGRTAFGESFDSGEIKQHTSIRQEGKLVWFEKLRLEGGSKAMNGRLALAGRAVCATFIMSGKPLPAQAIDLVREEAVRIGGESGQVGITQLKSLLVARFLGDSSEVARHVMLCIWRAVRPITLGRPAIVPRSWNT.

The protein belongs to the UreD family. As to quaternary structure, ureD, UreF and UreG form a complex that acts as a GTP-hydrolysis-dependent molecular chaperone, activating the urease apoprotein by helping to assemble the nickel containing metallocenter of UreC. The UreE protein probably delivers the nickel.

Its subcellular location is the cytoplasm. Required for maturation of urease via the functional incorporation of the urease nickel metallocenter. The polypeptide is Urease accessory protein UreD (Nitrosospira multiformis (strain ATCC 25196 / NCIMB 11849 / C 71)).